Reading from the N-terminus, the 245-residue chain is AP-1-like transcription factor YAP7 (245 aa).

A disordered region spans residues 1-144; sequence MRQRRSVVAV…NRDAQRAYRE (144 aa). Residues 74 to 94 show a composition bias toward polar residues; the sequence is SANNDGSSKIKKVQTSNQKDQ. 2 stretches are compositionally biased toward basic and acidic residues: residues 95–114 and 135–144; these read MTTK…KSDD and NRDAQRAYRE. Positions 125–188 constitute a bZIP domain; that stretch reads VDSVEKRRRQ…SDTKENLQKS (64 aa). Residues 130–149 form a basic motif region; it reads KRRRQNRDAQRAYRERRTTR. Residues 153–181 form a leucine-zipper region; the sequence is LEEKVEMLHNLVDDWQRKYKLLESEFSDT.

Belongs to the bZIP family. YAP subfamily. As to quaternary structure, homodimer.

The protein resides in the nucleus. In terms of biological role, probable transcription activator linked to cell cycle that induces transcription activation of genes in the environmental stress response and metabolism control pathways, like the closely related YAP5. This is AP-1-like transcription factor YAP7 (YAP7) from Saccharomyces cerevisiae (strain ATCC 204508 / S288c) (Baker's yeast).